The following is a 648-amino-acid chain: Interferon-induced GTP-binding protein Mx1 (648 aa).

Residue Met-1 is modified to N-acetylmethionine. The disordered stretch occupies residues Met-1 to Ser-26. Residues Asp-56 to Pro-329 enclose the Dynamin-type G domain. The interval Gly-66–Ser-73 is G1 motif. Gly-66–Ser-73 provides a ligand contact to GTP. A G2 motif region spans residues Val-91 to Arg-93. Residues Asp-167–Gly-170 form a G3 motif region. Residues Asp-167 to Ile-171 and Thr-236 to Asp-239 contribute to the GTP site. Residues Thr-236–Asp-239 are G4 motif. Positions Lys-268–Gly-271 are G5 motif. The interval Leu-330 to Glu-355 is bundle signaling element (BSE). The tract at residues Glu-355 to Cys-522 is middle domain. The tract at residues Glu-356 to Glu-618 is stalk. Residues Lys-543 to Lys-546 are critical for lipid-binding. Residues Thr-560–Gly-648 form the GED domain.

The protein belongs to the TRAFAC class dynamin-like GTPase superfamily. Dynamin/Fzo/YdjA family. As to quaternary structure, homooligomer. Oligomerizes into multimeric filamentous or ring-like structures by virtue of its stalk domain. Oligomerization is critical for GTPase activity, protein stability, and recognition of viral target structures. Interacts with TRPC1, TRPC3, TRPC4, TRPC5, TRPC6 and TRPC7. Interacts with HSPA5. Interacts with TUBB/TUBB5. Interacts with DDX39A and DDX39B. ISGylated. Ubiquitously expressed.

The protein resides in the cytoplasm. Its subcellular location is the endoplasmic reticulum membrane. It localises to the perinuclear region. The protein localises to the nucleus. Functionally, interferon-induced dynamin-like GTPase with antiviral activity against rabies virus (RABV), vesicular stomatitis virus (VSV) and murine pneumonia virus (MPV). Isoform 1 but not isoform 2 shows antiviral activity against vesicular stomatitis virus (VSV). In Bos taurus (Bovine), this protein is Interferon-induced GTP-binding protein Mx1 (MX1).